The chain runs to 46 residues: Homeobox protein Hox-D4 (46 aa).

The homeobox DNA-binding region spans 1–46 (VNSNYTGGEPKRSRTAYTRQQVLELEKEFLFNRYLTRRRRIQHTLT).

This sequence belongs to the Antp homeobox family. Deformed subfamily. As to quaternary structure, forms a DNA-binding heterodimer with transcription factor PBX1.

The protein resides in the nucleus. In terms of biological role, sequence-specific transcription factor which is part of a developmental regulatory system that provides cells with specific positional identities on the anterior-posterior axis. The sequence is that of Homeobox protein Hox-D4 (HOXD4) from Ovis aries (Sheep).